The chain runs to 105 residues: uncharacterized protein (105 aa).

Positions 1–27 (MSLKSWHPQSKTKRVGASEGNPQWGSG) are disordered.

This is an uncharacterized protein from Homo sapiens (Human).